Reading from the N-terminus, the 144-residue chain is Large ribosomal subunit protein uL15 (144 aa).

The disordered stretch occupies residues 1–52 (MRLNTLSPAEGAKHAPKRVGRGIGSGLGKTAGRGHKGQNSRSGGGVRRGFEG). The span at 21–31 (RGIGSGLGKTA) shows a compositional bias: gly residues.

Belongs to the universal ribosomal protein uL15 family. In terms of assembly, part of the 50S ribosomal subunit.

Binds to the 23S rRNA. The sequence is that of Large ribosomal subunit protein uL15 from Yersinia pseudotuberculosis serotype O:1b (strain IP 31758).